Consider the following 284-residue polypeptide: 2-dehydro-3-deoxyphosphooctonate aldolase (284 aa).

Belongs to the KdsA family.

The protein resides in the cytoplasm. It catalyses the reaction D-arabinose 5-phosphate + phosphoenolpyruvate + H2O = 3-deoxy-alpha-D-manno-2-octulosonate-8-phosphate + phosphate. It participates in carbohydrate biosynthesis; 3-deoxy-D-manno-octulosonate biosynthesis; 3-deoxy-D-manno-octulosonate from D-ribulose 5-phosphate: step 2/3. It functions in the pathway bacterial outer membrane biogenesis; lipopolysaccharide biosynthesis. The sequence is that of 2-dehydro-3-deoxyphosphooctonate aldolase from Haemophilus influenzae (strain PittEE).